The following is a 371-amino-acid chain: Aspartate-semialdehyde dehydrogenase (371 aa).

Residues 11-14 (RGMV), 38-39 (TS), and Gln-75 contribute to the NADP(+) site. Phosphate is bound at residue Arg-104. Cys-137 functions as the Acyl-thioester intermediate in the catalytic mechanism. Gln-164 is a binding site for substrate. Residue 167 to 168 (SG) coordinates NADP(+). Position 243 (Glu-243) interacts with substrate. Lys-246 contacts phosphate. Arg-269 lines the substrate pocket. His-276 acts as the Proton acceptor in catalysis. Gln-352 lines the NADP(+) pocket.

It belongs to the aspartate-semialdehyde dehydrogenase family. As to quaternary structure, homodimer.

The enzyme catalyses L-aspartate 4-semialdehyde + phosphate + NADP(+) = 4-phospho-L-aspartate + NADPH + H(+). It participates in amino-acid biosynthesis; L-lysine biosynthesis via DAP pathway; (S)-tetrahydrodipicolinate from L-aspartate: step 2/4. It functions in the pathway amino-acid biosynthesis; L-methionine biosynthesis via de novo pathway; L-homoserine from L-aspartate: step 2/3. The protein operates within amino-acid biosynthesis; L-threonine biosynthesis; L-threonine from L-aspartate: step 2/5. Catalyzes the NADPH-dependent formation of L-aspartate-semialdehyde (L-ASA) by the reductive dephosphorylation of L-aspartyl-4-phosphate. This chain is Aspartate-semialdehyde dehydrogenase, found in Buchnera aphidicola subsp. Schizaphis graminum (strain Sg).